We begin with the raw amino-acid sequence, 291 residues long: Transmembrane O-methyltransferase (291 aa).

Residues 31–51 (VGTMSPAIALAFLPLVVTLLV) traverse the membrane as a helical segment. S-adenosyl-L-methionine-binding positions include Glu-137, 139-140 (GT), Ser-145, Glu-163, and Ser-193.

Belongs to the class I-like SAM-binding methyltransferase superfamily. Cation-dependent O-methyltransferase family. As to quaternary structure, interacts with LHFPL5, PCDH15, TMC1, TMC2 and TMIE. Interacts directly with TMC1. The interaction of TOMT with TMC1 and TMC2 is required for the transportation of TMC1/2 into the stereocilia of hair cells.

Its subcellular location is the membrane. It is found in the cytoplasm. The protein localises to the endoplasmic reticulum. The catalysed reaction is a catechol + S-adenosyl-L-methionine = a guaiacol + S-adenosyl-L-homocysteine + H(+). In terms of biological role, catalyzes the O-methylation, and thereby the inactivation, of catecholamine neurotransmitters and catechol hormones. Required for auditory function. Component of the cochlear hair cell's mechanotransduction (MET) machinery. Involved in the assembly of the asymmetric tip-link MET complex. Required for transportation of TMC1 and TMC2 proteins into the mechanically sensitive stereocilia of the hair cells. The function in MET is independent of the enzymatic activity. The sequence is that of Transmembrane O-methyltransferase from Pan troglodytes (Chimpanzee).